Here is a 567-residue protein sequence, read N- to C-terminus: Oxygen-dependent choline dehydrogenase (567 aa).

An FAD-binding site is contributed by 4 to 33 (DYIIIGAGSAGNVLAARLTEDADVTVLLLE). Residue H473 is the Proton acceptor of the active site.

This sequence belongs to the GMC oxidoreductase family. FAD serves as cofactor.

The enzyme catalyses choline + A = betaine aldehyde + AH2. It carries out the reaction betaine aldehyde + NAD(+) + H2O = glycine betaine + NADH + 2 H(+). It participates in amine and polyamine biosynthesis; betaine biosynthesis via choline pathway; betaine aldehyde from choline (cytochrome c reductase route): step 1/1. Its function is as follows. Involved in the biosynthesis of the osmoprotectant glycine betaine. Catalyzes the oxidation of choline to betaine aldehyde and betaine aldehyde to glycine betaine at the same rate. The chain is Oxygen-dependent choline dehydrogenase from Yersinia pseudotuberculosis serotype IB (strain PB1/+).